Here is a 662-residue protein sequence, read N- to C-terminus: UvrABC system protein B (662 aa).

One can recognise a Helicase ATP-binding domain in the interval 31 to 188 (DNIEGGEKAQ…NDLVDIQFER (158 aa)). Residue 44–51 (GATGTGKT) coordinates ATP. The short motif at 97–120 (YYDYYQPEAYVPSSDTYIEKDSSV) is the Beta-hairpin element. Positions 435 to 601 (QIDDLLGEIN…TIKKEIRDLI (167 aa)) constitute a Helicase C-terminal domain. The UVR domain maps to 626–661 (KELVKKLEKQMQEAVEVLDFELAAQIRDMMLEVKAL).

The protein belongs to the UvrB family. As to quaternary structure, forms a heterotetramer with UvrA during the search for lesions. Interacts with UvrC in an incision complex.

The protein resides in the cytoplasm. The UvrABC repair system catalyzes the recognition and processing of DNA lesions. A damage recognition complex composed of 2 UvrA and 2 UvrB subunits scans DNA for abnormalities. Upon binding of the UvrA(2)B(2) complex to a putative damaged site, the DNA wraps around one UvrB monomer. DNA wrap is dependent on ATP binding by UvrB and probably causes local melting of the DNA helix, facilitating insertion of UvrB beta-hairpin between the DNA strands. Then UvrB probes one DNA strand for the presence of a lesion. If a lesion is found the UvrA subunits dissociate and the UvrB-DNA preincision complex is formed. This complex is subsequently bound by UvrC and the second UvrB is released. If no lesion is found, the DNA wraps around the other UvrB subunit that will check the other stand for damage. The chain is UvrABC system protein B from Streptococcus pneumoniae serotype 2 (strain D39 / NCTC 7466).